Consider the following 814-residue polypeptide: DNA ligase (814 aa).

Residues aspartate 46–aspartate 50, serine 95–leucine 96, and glutamate 129 contribute to the NAD(+) site. Lysine 131 serves as the catalytic N6-AMP-lysine intermediate. 4 residues coordinate NAD(+): arginine 152, glutamate 189, lysine 305, and lysine 329. 4 residues coordinate Zn(2+): cysteine 434, cysteine 437, cysteine 458, and cysteine 464. The tract at residues serine 526–aspartate 549 is disordered. In terms of domain architecture, BRCT spans threonine 735 to alanine 814.

Belongs to the NAD-dependent DNA ligase family. LigA subfamily. The cofactor is Mg(2+). Mn(2+) serves as cofactor.

The enzyme catalyses NAD(+) + (deoxyribonucleotide)n-3'-hydroxyl + 5'-phospho-(deoxyribonucleotide)m = (deoxyribonucleotide)n+m + AMP + beta-nicotinamide D-nucleotide.. DNA ligase that catalyzes the formation of phosphodiester linkages between 5'-phosphoryl and 3'-hydroxyl groups in double-stranded DNA using NAD as a coenzyme and as the energy source for the reaction. It is essential for DNA replication and repair of damaged DNA. The chain is DNA ligase from Methylorubrum extorquens (strain CM4 / NCIMB 13688) (Methylobacterium extorquens).